Here is a 488-residue protein sequence, read N- to C-terminus: Protein nucleotidyltransferase YdiU (488 aa).

8 residues coordinate ATP: glycine 91, glycine 93, arginine 94, lysine 114, aspartate 126, glycine 127, arginine 177, and arginine 184. The interval 108-127 (RFDIQLKGSGPTPYSRRGDG) is disordered. The active-site Proton acceptor is aspartate 253. Mg(2+) is bound by residues asparagine 254 and aspartate 263. Aspartate 263 is a binding site for ATP.

The protein belongs to the SELO family. It depends on Mg(2+) as a cofactor. Requires Mn(2+) as cofactor.

It catalyses the reaction L-seryl-[protein] + ATP = 3-O-(5'-adenylyl)-L-seryl-[protein] + diphosphate. The enzyme catalyses L-threonyl-[protein] + ATP = 3-O-(5'-adenylyl)-L-threonyl-[protein] + diphosphate. The catalysed reaction is L-tyrosyl-[protein] + ATP = O-(5'-adenylyl)-L-tyrosyl-[protein] + diphosphate. It carries out the reaction L-histidyl-[protein] + UTP = N(tele)-(5'-uridylyl)-L-histidyl-[protein] + diphosphate. It catalyses the reaction L-seryl-[protein] + UTP = O-(5'-uridylyl)-L-seryl-[protein] + diphosphate. The enzyme catalyses L-tyrosyl-[protein] + UTP = O-(5'-uridylyl)-L-tyrosyl-[protein] + diphosphate. Functionally, nucleotidyltransferase involved in the post-translational modification of proteins. It can catalyze the addition of adenosine monophosphate (AMP) or uridine monophosphate (UMP) to a protein, resulting in modifications known as AMPylation and UMPylation. This is Protein nucleotidyltransferase YdiU from Bacillus anthracis (strain A0248).